The sequence spans 321 residues: MEVKLDFSSEDFSNYSYNYSGDIYYGDVAPCVVNFLISESALAFIYVLMFLCNAIGNSLVLRTFLKYRAQAQSFDYLMMGFCLNSLFLAGYLLMRLLRMFEIFMNTELCKLEAFFLNLSIYWSPFILVFISVLRCLLIFCATRLWVKKTLIGQVFLCCSFVLACFGALPHVMVTSYYEPSSCIEEDGVLTEQLRTKLNTFHTWYSFAGPLFITVICYSMSCYKLFKTKLSKRAEVVTIITMTTLLFIVFCIPYYIMESIDTLLRVGVIEETCAKRSAIVYGIQCTYMLLVLYYCMLPLMFAMFGSLFRQRMAAWCKTICHC.

Residues 1–34 are Extracellular-facing; the sequence is MEVKLDFSSEDFSNYSYNYSGDIYYGDVAPCVVN. N-linked (GlcNAc...) asparagine; by host glycans are attached at residues Asn14 and Asn18. The chain crosses the membrane as a helical span at residues 35-51; sequence FLISESALAFIYVLMFL. Over 52–76 the chain is Cytoplasmic; the sequence is CNAIGNSLVLRTFLKYRAQAQSFDY. A helical membrane pass occupies residues 77–93; the sequence is LMMGFCLNSLFLAGYLL. Over 94 to 124 the chain is Extracellular; that stretch reads MRLLRMFEIFMNTELCKLEAFFLNLSIYWSP. Residue Asn117 is glycosylated (N-linked (GlcNAc...) asparagine; by host). A helical membrane pass occupies residues 125-141; it reads FILVFISVLRCLLIFCA. Residues 142–149 lie on the Cytoplasmic side of the membrane; the sequence is TRLWVKKT. A helical membrane pass occupies residues 150 to 166; it reads LIGQVFLCCSFVLACFG. The Extracellular portion of the chain corresponds to 167–196; sequence ALPHVMVTSYYEPSSCIEEDGVLTEQLRTK. A helical membrane pass occupies residues 197–215; sequence LNTFHTWYSFAGPLFITVI. Residues 216–234 lie on the Cytoplasmic side of the membrane; the sequence is CYSMSCYKLFKTKLSKRAE. Residues 235 to 251 form a helical membrane-spanning segment; that stretch reads VVTIITMTTLLFIVFCI. The Extracellular portion of the chain corresponds to 252–286; sequence PYYIMESIDTLLRVGVIEETCAKRSAIVYGIQCTY. Residues 287 to 303 traverse the membrane as a helical segment; it reads MLLVLYYCMLPLMFAMF. At 304–321 the chain is on the cytoplasmic side; sequence GSLFRQRMAAWCKTICHC.

The protein belongs to the G-protein coupled receptor 1 family.

The protein localises to the host cell membrane. Functionally, may be highly relevant to the process of cellular transformation and rapid T-cell proliferation effected by HVS during latent infections of T-cells in susceptible hosts. This chain is G-protein coupled receptor homolog ECRF3 (74), found in Saimiri sciureus (Common squirrel monkey).